The primary structure comprises 422 residues: Enolase (422 aa).

Q162 contributes to the (2R)-2-phosphoglycerate binding site. The Proton donor role is filled by E204. Residues D241, E284, and D311 each contribute to the Mg(2+) site. (2R)-2-phosphoglycerate-binding residues include K336, R365, S366, and K387. The active-site Proton acceptor is the K336.

It belongs to the enolase family. It depends on Mg(2+) as a cofactor.

It localises to the cytoplasm. Its subcellular location is the secreted. The protein resides in the cell surface. It carries out the reaction (2R)-2-phosphoglycerate = phosphoenolpyruvate + H2O. It functions in the pathway carbohydrate degradation; glycolysis; pyruvate from D-glyceraldehyde 3-phosphate: step 4/5. Functionally, catalyzes the reversible conversion of 2-phosphoglycerate (2-PG) into phosphoenolpyruvate (PEP). It is essential for the degradation of carbohydrates via glycolysis. The protein is Enolase of Bartonella quintana (strain Toulouse) (Rochalimaea quintana).